Here is a 164-residue protein sequence, read N- to C-terminus: Transcription antitermination protein NusB (164 aa).

The segment at 144–164 (KNGRGLIDHTPPRAAKTDAKS) is disordered. A compositionally biased stretch (basic and acidic residues) spans 149-164 (LIDHTPPRAAKTDAKS).

This sequence belongs to the NusB family.

Involved in transcription antitermination. Required for transcription of ribosomal RNA (rRNA) genes. Binds specifically to the boxA antiterminator sequence of the ribosomal RNA (rrn) operons. The sequence is that of Transcription antitermination protein NusB from Chlorobium phaeovibrioides (strain DSM 265 / 1930) (Prosthecochloris vibrioformis (strain DSM 265)).